Consider the following 1037-residue polypeptide: MDRMASSMKQVPNPLPKVLSRRGVGAGLEAAERESFERTQTVSINKAINTQEVAVKEKHARTCILGTHHEKGAQTFWSVVNRLPLSSNAVLCWKFCHVFHKLLRDGHPNVLKDSLRYRNELSDMSRMWGHLSEGYGQLCSIYLKLLRTKMEYHTKNPRFPGNLQMSDRQLDEAGESDVNNFFQLTVEMFDYLECELNLFQTVFNSLDMSRSVSVTAAGQCRLAPLIQVILDCSHLYDYTVKLLFKLHSCLPADTLQGHRDRFMEQFTKLKDLFYRSSNLQYFKRLIQIPQLPENPPNFLRASALSEHISPVVVIPAEASSPDSEPVLEKDDLMDMDASQQNLFDNKFDDIFGSSFSSDPFNFNSQNGVNKDEKDHLIERLYREISGLKAQLENMKTESQRVVLQLKGHVSELEADLAEQQHLRQQAADDCEFLRAELDELRRQREDTEKAQRSLSEIERKAQANEQRYSKLKEKYSELVQNHADLLRKNAEVTKQVSMARQAQVDLEREKKELEDSLERISDQGQRKTQEQLEVLESLKQELATSQRELQVLQGSLETSAQSEANWAAEFAELEKERDSLVSGAAHREEELSALRKELQDTQLKLASTEESMCQLAKDQRKMLLVGSRKAAEQVIQDALNQLEEPPLISCAGSADHLLSTVTSISSCIEQLEKSWSQYLACPEDISGLLHSITLLAHLTSDAIAHGATTCLRAPPEPADSLTEACKQYGRETLAYLASLEEEGSLENADSTAMRNCLSKIKAIGEELLPRGLDIKQEELGDLVDKEMAATSAAIETATARIEEMLSKSRAGDTGVKLEVNERILGCCTSLMQAIQVLIVASKDLQREIVESGRGTASPKEFYAKNSRWTEGLISASKAVGWGATVMVDAADLVVQGRGKFEELMVCSHEIAASTAQLVAASKVKADKDSPNLAQLQQASRGVNQATAGVVASTISGKSQIEETDNMDFSSMTLTQIKRQEMDSQVRVLELENELQKERQKLGELRKKHYELAGVAEGWEEGTEASPPTLQEVVTEKE.

In terms of domain architecture, ENTH spans 32–160 (ERESFERTQT…EYHTKNPRFP (129 aa)). Phosphoserine is present on S338. A coiled-coil region spans residues 368 to 644 (VNKDEKDHLI…IQDALNQLEE (277 aa)). A pDED region spans residues 410–491 (SELEADLAEQ…HADLLRKNAE (82 aa)). The 242-residue stretch at 771–1012 (GLDIKQEELG…ELRKKHYELA (242 aa)) folds into the I/LWEQ domain. Residues 867 to 924 (RWTEGLISASKAVGWGATVMVDAADLVVQGRGKFEELMVCSHEIAASTAQLVAASKVK) form an important for actin binding region. The segment at 1017-1037 (GWEEGTEASPPTLQEVVTEKE) is disordered.

It belongs to the SLA2 family. Homodimer. Binds actin. Binds HTT (via N-terminus). This interaction is restricted to the brain. Binds to IFT57. In normal conditions, it poorly interacts with IFT57, HIP1 being strongly associated with HTT. However, in mutant HTT proteins with a long poly-Gln region, interaction between HTT and HIP1 is inhibited, promoting the interaction between HIP1 and IFT57. Interacts with CLTB (via N-terminus). Interacts (via coiled coil domain) with AR. Interacts with AP2A1, AP2A2, CLTC and HIP1R. Interacts with GRIA1, GRIN2A and GRIN2B. In terms of tissue distribution, ubiquitously expressed with the highest level in brain. Expression is up-regulated in prostate and colon cancer.

It localises to the cytoplasm. The protein resides in the nucleus. The protein localises to the endomembrane system. It is found in the cytoplasmic vesicle. Its subcellular location is the clathrin-coated vesicle membrane. In terms of biological role, plays a role in clathrin-mediated endocytosis and trafficking. Involved in regulating AMPA receptor trafficking in the central nervous system in an NMDA-dependent manner. Regulates presynaptic nerve terminal activity. Enhances androgen receptor (AR)-mediated transcription. May act as a proapoptotic protein that induces cell death by acting through the intrinsic apoptosis pathway. Binds 3-phosphoinositides (via ENTH domain). May act through the ENTH domain to promote cell survival by stabilizing receptor tyrosine kinases following ligand-induced endocytosis. May play a functional role in the cell filament networks. May be required for differentiation, proliferation, and/or survival of somatic and germline progenitors. The chain is Huntingtin-interacting protein 1 (HIP1) from Homo sapiens (Human).